We begin with the raw amino-acid sequence, 612 residues long: Dihydroxy-acid dehydratase (612 aa).

A Mg(2+)-binding site is contributed by aspartate 81. Residue cysteine 122 participates in [2Fe-2S] cluster binding. Residues aspartate 123 and lysine 124 each contribute to the Mg(2+) site. An N6-carboxylysine modification is found at lysine 124. Cysteine 193 is a binding site for [2Fe-2S] cluster. Glutamate 489 is a binding site for Mg(2+). Serine 515 functions as the Proton acceptor in the catalytic mechanism.

It belongs to the IlvD/Edd family. In terms of assembly, homodimer. [2Fe-2S] cluster is required as a cofactor. It depends on Mg(2+) as a cofactor.

The enzyme catalyses (2R)-2,3-dihydroxy-3-methylbutanoate = 3-methyl-2-oxobutanoate + H2O. The catalysed reaction is (2R,3R)-2,3-dihydroxy-3-methylpentanoate = (S)-3-methyl-2-oxopentanoate + H2O. It functions in the pathway amino-acid biosynthesis; L-isoleucine biosynthesis; L-isoleucine from 2-oxobutanoate: step 3/4. Its pathway is amino-acid biosynthesis; L-valine biosynthesis; L-valine from pyruvate: step 3/4. Its function is as follows. Functions in the biosynthesis of branched-chain amino acids. Catalyzes the dehydration of (2R,3R)-2,3-dihydroxy-3-methylpentanoate (2,3-dihydroxy-3-methylvalerate) into 2-oxo-3-methylpentanoate (2-oxo-3-methylvalerate) and of (2R)-2,3-dihydroxy-3-methylbutanoate (2,3-dihydroxyisovalerate) into 2-oxo-3-methylbutanoate (2-oxoisovalerate), the penultimate precursor to L-isoleucine and L-valine, respectively. The sequence is that of Dihydroxy-acid dehydratase from Pseudomonas paraeruginosa (strain DSM 24068 / PA7) (Pseudomonas aeruginosa (strain PA7)).